The chain runs to 65 residues: Alpha-toxin BeM10 (65 aa).

Positions 2 to 65 (RDGYIADDKD…IKQKVSGKCN (64 aa)) constitute an LCN-type CS-alpha/beta domain. 4 disulfides stabilise this stretch: Cys-12/Cys-64, Cys-16/Cys-35, Cys-22/Cys-45, and Cys-26/Cys-47.

This sequence belongs to the long (4 C-C) scorpion toxin superfamily. Sodium channel inhibitor family. Alpha subfamily. Expressed by the venom gland.

The protein resides in the secreted. Functionally, alpha toxins bind voltage-independently at site-3 of sodium channels (Nav) and inhibit the inactivation of the activated channels, thereby blocking neuronal transmission. Has paralytic activity in mice. The protein is Alpha-toxin BeM10 of Mesobuthus eupeus (Lesser Asian scorpion).